The primary structure comprises 386 residues: Patatin-10 (386 aa).

A signal peptide spans 1 to 23 (MATTKSFLILFFMILATTSSTCA). Residues 32-229 (LSIDGGGIKG…TVGDPALLSL (198 aa)) enclose the PNPLA domain. The GXGXXG signature appears at 36–41 (GGGIKG). Positions 75-79 (GTSTG) match the GXSXG motif. Residue Ser77 is the Nucleophile of the active site. A glycan (N-linked (GlcNAc...) asparagine) is linked at Asn115. Asp215 functions as the Proton acceptor in the catalytic mechanism. The DGA/G motif lies at 215–217 (DGG). A coiled-coil region spans residues 321–384 (ENALTGTTTE…NRKKLRANKA (64 aa)).

It belongs to the patatin family. In terms of tissue distribution, tuber.

The protein resides in the vacuole. In terms of biological role, probable lipolytic acyl hydrolase (LAH), an activity which is thought to be involved in the response of tubers to pathogens. This Solanum tuberosum (Potato) protein is Patatin-10.